The sequence spans 442 residues: Transducin beta-like protein 2 (442 aa).

Positions 36-71 (EKPSQPVCQKENEPKKSGSKKQKQNQRVRKEKPQQH) are disordered. Positions 52-65 (SGSKKQKQNQRVRK) are enriched in basic residues. WD repeat units lie at residues 84–123 (SHSG…QREH), 130–170 (VELD…DGGF), 182–222 (KHKA…STIN), 224–263 (NQMN…GEFQ), 273–312 (GHSA…KKQQ), 323–362 (EEAS…KEEY), and 366–404 (VHGE…RAVV). Lys164 participates in a covalent cross-link: Glycyl lysine isopeptide (Lys-Gly) (interchain with G-Cter in SUMO2). Residue Thr428 is modified to Phosphothreonine.

The polypeptide is Transducin beta-like protein 2 (Tbl2) (Mus musculus (Mouse)).